A 356-amino-acid chain; its full sequence is Putative zinc finger protein At1g68190 (356 aa).

Zn(2+)-binding residues include C14, C17, C37, H42, C57, C60, C80, and H85. The B box-type 1; atypical zinc finger occupies 14 to 56 (CEFCKAYRAVVYCIADTANLCLTCDAKVHSANSLSGRHLRTVL). A B box-type 2; atypical zinc finger spans residues 57-97 (CDSCKNQPCVVRCFDHKMFLCHGCNDKFHGGGSSEHRRRDL). Residues 159–178 (ENGSSSLTERGDPSPLELPK) form a disordered region.

Belongs to the CONSTANS family.

The protein resides in the nucleus. The polypeptide is Putative zinc finger protein At1g68190 (Arabidopsis thaliana (Mouse-ear cress)).